The primary structure comprises 115 residues: C-C motif chemokine 6 (115 aa).

The signal sequence occupies residues 1–21 (MRHSKTAISFFILVAVLGSQA). Cystine bridges form between C49–C72, C50–C88, and C59–C99.

This sequence belongs to the intercrine beta (chemokine CC) family.

Its subcellular location is the secreted. The protein is C-C motif chemokine 6 (Ccl6) of Rattus norvegicus (Rat).